An 89-amino-acid chain; its full sequence is Large ribosomal subunit protein bL27 (89 aa).

Positions 1 to 22 (MAHKKAGGSSRNGRDSESKRLG) are disordered.

The protein belongs to the bacterial ribosomal protein bL27 family.

This Rhizobium etli (strain CIAT 652) protein is Large ribosomal subunit protein bL27.